Here is a 525-residue protein sequence, read N- to C-terminus: GMP synthase [glutamine-hydrolyzing] (525 aa).

Residues 8–207 (KILILDFGSQ…ALDICQCDAN (200 aa)) form the Glutamine amidotransferase type-1 domain. Residue Cys85 is the Nucleophile of the active site. Active-site residues include His181 and Glu183. The GMPS ATP-PPase domain maps to 208 to 400 (WKPASIIEDA…LGLPYDMLYR (193 aa)). Residue 235 to 241 (SGGVDSS) coordinates ATP.

In terms of assembly, homodimer.

The catalysed reaction is XMP + L-glutamine + ATP + H2O = GMP + L-glutamate + AMP + diphosphate + 2 H(+). It functions in the pathway purine metabolism; GMP biosynthesis; GMP from XMP (L-Gln route): step 1/1. Catalyzes the synthesis of GMP from XMP. The polypeptide is GMP synthase [glutamine-hydrolyzing] (Shewanella woodyi (strain ATCC 51908 / MS32)).